A 687-amino-acid chain; its full sequence is Carboxysome assembly protein CcmM (687 aa).

Residues 242 to 327 (SINSDITNQI…RVVEVIIQRP (86 aa)) are rbcS-like repeat 1, SSUL1. Disordered stretches follow at residues 328–355 (GDVP…SAVA) and 442–476 (VHRP…SSAG). Over residues 335 to 346 (SRGTTTTKALSS) the composition is skewed to polar residues. The interval 366 to 445 (ANQLRALLHQ…RVAEIVVHRP (80 aa)) is rbcS-like repeat 2, SSUL2. Residues 451–472 (GKPSSSSSSVGYKSAPVSSAGG) are compositionally biased toward low complexity. Residues 480–562 (PEVIATVRGL…RVLEQIIQRP (83 aa)) are rbcS-like repeat 3, SSUL3. The tract at residues 565-590 (NVVAGRSPSSSSASTSSSASSNGFGS) is disordered. The span at 568-587 (AGRSPSSSSASTSSSASSNG) shows a compositional bias: low complexity. The tract at residues 599-687 (SAVRLDNSVV…RVLETIIQRP (89 aa)) is rbcS-like repeat 4, SSUL4.

This sequence belongs to the gamma-class carbonic anhydrase family. As to quaternary structure, probably forms homotrimers. Full length CcmM interacts with CcaA, CcmK1, CcmK2, CcmK4, CcmL, CcmN and itself, while the N-terminus of CcmM (first 249 residues) only interacts with CcaA, CcmM and CcmN. A probable CcmM-CcaA-CcmN complex as well as a CcaA-RuBisCO-CcmM complex can also be isolated. Interacts with full-length CcaA and the first 220 residues of CcaA; surface residues Gln-177 to Gln-188 are responsible in part for binding. Multiple forms of the protein of 73 (full length), 62, 52 (the most predominant form) and 36 kDa are seen even in the presence of protease inhibitors. CcmM52 interacts with CcaA.

Its subcellular location is the carboxysome. Functions as a scaffold protein for the assembly of beta-carboxysomes, initiates carboxysome assembly via its N-terminal domain binding to CcaA, CcmK and CcmL. Binds HCO(3)-, suggesting it may play a role in the activity or regulation of bicarbonate dehydration. Also initiates carboxysome assembly by coalescing RuBisCO (ribulose bisphosphate carboxylase, rbcL-rbcS) via its SSU-like domains. Produced as a full-length and a shorter form; both forms are required for correct carboxysome assembly and growth. Despite its strong similarity to gamma-class carbonic anhydrase (CA) it does not have detectable CA activity. Functionally, beta-carboxysome assembly initiates when soluble RuBisCO is condensed into a liquid matrix in a pre-carboxysome by the RbcS-like domains of probably both forms of CcmM. CcmN interacts with the N-terminus of full length CcmM, and then recruits the shell proteins (CcmK) via CcmN's encapsulation peptide. CcmM73 also interacts with CcmK proteins and CcmL directly. Shell formation requires CcmK proteins and CcmO. CcmL caps the otherwise elongated carboxysome. Once fully encapsulated carboxysomes are formed, they migrate within the cell probably via interactions with the cytoskeleton. This Synechocystis sp. (strain ATCC 27184 / PCC 6803 / Kazusa) protein is Carboxysome assembly protein CcmM.